The sequence spans 258 residues: Imidazole glycerol phosphate synthase subunit HisF (258 aa).

Catalysis depends on residues Asp11 and Asp130.

Belongs to the HisA/HisF family. In terms of assembly, heterodimer of HisH and HisF.

The protein resides in the cytoplasm. It carries out the reaction 5-[(5-phospho-1-deoxy-D-ribulos-1-ylimino)methylamino]-1-(5-phospho-beta-D-ribosyl)imidazole-4-carboxamide + L-glutamine = D-erythro-1-(imidazol-4-yl)glycerol 3-phosphate + 5-amino-1-(5-phospho-beta-D-ribosyl)imidazole-4-carboxamide + L-glutamate + H(+). It participates in amino-acid biosynthesis; L-histidine biosynthesis; L-histidine from 5-phospho-alpha-D-ribose 1-diphosphate: step 5/9. Its function is as follows. IGPS catalyzes the conversion of PRFAR and glutamine to IGP, AICAR and glutamate. The HisF subunit catalyzes the cyclization activity that produces IGP and AICAR from PRFAR using the ammonia provided by the HisH subunit. This chain is Imidazole glycerol phosphate synthase subunit HisF, found in Xanthomonas euvesicatoria pv. vesicatoria (strain 85-10) (Xanthomonas campestris pv. vesicatoria).